A 217-amino-acid chain; its full sequence is MILILLGPPGIGKGTQASVLSYILKINHISTGDIFRKNFKENTELGTLSKKFIAQGLLVPDDITNQMIADYLSKDIATKDFLLDGFPRNVLQARFLDDFFKKSHLFLTKVIYFNAGTKDLMKRIAGRRICPECGKVYHIEKIPPKNPGICDKDQKTLIQREDDKPETFLKRLKVFNKETLPLVQYYCEQNQLFEVDGMQTIDQVTKMILEVLETDRK.

10-15 contacts ATP; sequence GIGKGT. The tract at residues 30–59 is NMP; sequence STGDIFRKNFKENTELGTLSKKFIAQGLLV. AMP contacts are provided by residues Thr31, Arg36, 57-59, 85-88, and Gln92; these read LLV and GFPR. The segment at 126–163 is LID; the sequence is GRRICPECGKVYHIEKIPPKNPGICDKDQKTLIQREDD. An ATP-binding site is contributed by Arg127. Positions 130 and 133 each coordinate Zn(2+). ATP is bound at residue 136–137; the sequence is VY. Positions 150 and 153 each coordinate Zn(2+). Arg160 and Arg171 together coordinate AMP. Gln199 serves as a coordination point for ATP.

Belongs to the adenylate kinase family. In terms of assembly, monomer.

It localises to the cytoplasm. The catalysed reaction is AMP + ATP = 2 ADP. The protein operates within purine metabolism; AMP biosynthesis via salvage pathway; AMP from ADP: step 1/1. Its function is as follows. Catalyzes the reversible transfer of the terminal phosphate group between ATP and AMP. Plays an important role in cellular energy homeostasis and in adenine nucleotide metabolism. This chain is Adenylate kinase, found in Aster yellows witches'-broom phytoplasma (strain AYWB).